Here is a 206-residue protein sequence, read N- to C-terminus: Smr domain-containing protein C11H11.03c (206 aa).

The Smr domain maps to 75–150 (IDLHGLYIDE…NEGRIYVYLP (76 aa)).

It localises to the cytoplasm. The protein resides in the nucleus. This is Smr domain-containing protein C11H11.03c from Schizosaccharomyces pombe (strain 972 / ATCC 24843) (Fission yeast).